The primary structure comprises 176 residues: Ribosome maturation factor RimM (176 aa).

Residues 93–168 form the PRC barrel domain; that stretch reads DDEVYIEDIL…TIRITPPPGL (76 aa).

It belongs to the RimM family. As to quaternary structure, binds ribosomal protein uS19.

The protein resides in the cytoplasm. An accessory protein needed during the final step in the assembly of 30S ribosomal subunit, possibly for assembly of the head region. Essential for efficient processing of 16S rRNA. May be needed both before and after RbfA during the maturation of 16S rRNA. It has affinity for free ribosomal 30S subunits but not for 70S ribosomes. The polypeptide is Ribosome maturation factor RimM (Oleidesulfovibrio alaskensis (strain ATCC BAA-1058 / DSM 17464 / G20) (Desulfovibrio alaskensis)).